Consider the following 681-residue polypeptide: Type VI secretion system spike protein VgrG1 (681 aa).

A disordered region spans residues 621–640; sequence NSGGSPSSGSGWGGKSPVDP.

The protein belongs to the VgrG protein family.

It is found in the secreted. The enzyme catalyses L-arginyl-[protein] + NAD(+) = N(omega)-(ADP-D-ribosyl)-L-arginyl-[protein] + nicotinamide + H(+). Functionally, part of the type VI secretion system specialized secretion system, which delivers several virulence factors in both prokaryotic and eukaryotic cells during infection. Acts directly as an secreted effector with an actin ADP-ribosyltransferase activity that disrupts the host actin cytoskeleton, leading to a decrease in host cell viability and an increase in apoptosis. This chain is Type VI secretion system spike protein VgrG1 (vgrG1), found in Aeromonas hydrophila.